We begin with the raw amino-acid sequence, 280 residues long: F-box only protein 27 (280 aa).

The disordered stretch occupies residues 1–26; the sequence is MGAWASRGRAARVPAPEPESEPEEAL. The 48-residue stretch at 25–72 folds into the F-box domain; that stretch reads ALDLSQLPPELLLVVLSHVPPRTLLGRCRQVCRGWRALVDGQALWLLI. Positions 100 to 277 constitute an FBA domain; the sequence is PCPLGRFCAR…VTNSSVIVRV (178 aa).

Part of a SCF (SKP1-cullin-F-box) protein ligase complex. Interacts with SKP1 and CUL1.

Substrate-recognition component of the SCF (SKP1-CUL1-F-box protein)-type E3 ubiquitin ligase complex. Able to recognize and bind complex-type oligosaccharides. The polypeptide is F-box only protein 27 (FBXO27) (Macaca fascicularis (Crab-eating macaque)).